A 423-amino-acid chain; its full sequence is MVKALQGAAQNLPADVNQLIDQLERHCLAPDGSLVTKSVYSDLQLAREEMSRERLRYLEAMAIYCEAVAMVEEYQQAISVANHGGIRDVQGLYPQLGLKNSPQVYETLEHRLVVAEAAQKLRLPLISDGGEIHEEEIEKWSILSRSSLDSASTSFTISSTSNSVNYANSSANSVAGGISLSAVDTDVVGGVPNRFLGITPAYLSYVQLQNTISMDMADYQMFLAREIEGRLKEKCDKLADAIVDDTDSSTGNRNSSARLPERVKFIIEEIERDEAALREDLYSADRKFAEYYNVLEQILGVLIKLVKDLKLEHQHKYNEMQKTWLCKRCETMNAKLRVLENVLLLETYTPDSISALHNIRNYLVEATEEASAAYNKAVTRLREYQGVDPHFDTIARQYHDIVKKLENMQWTIHQVEMDLKSHD.

Positions 267 to 287 form a coiled coil; sequence IEEIERDEAALREDLYSADRK.

The protein belongs to the HAUS4 family. As to quaternary structure, part of the augmin complex composed of 8 subunits. The complex acts on microtubules and interacts with gamma-tubulin in spindles and the phragmoplast.

The protein localises to the cytoplasm. It localises to the cytoskeleton. It is found in the spindle. Its subcellular location is the phragmoplast. Functionally, involved in microtubules reorganization during spindle and phragmoplast development. This Arabidopsis thaliana (Mouse-ear cress) protein is AUGMIN subunit 4 (AUG4).